The primary structure comprises 1006 residues: DNA ligase 4 (1006 aa).

The interval 1–36 (MDSDDDYNGPADTNPRLEDEESDLDEKYPNRPRNHS) is disordered. Glutamate 318, lysine 320, leucine 321, arginine 325, glutamate 387, phenylalanine 427, glutamate 487, lysine 492, lysine 509, and lysine 511 together coordinate ATP. Lysine 320 serves as the catalytic N6-AMP-lysine intermediate. Glutamate 387 is a binding site for Mg(2+). Glutamate 487 is a binding site for Mg(2+). 2 BRCT domains span residues 718–811 (PSGN…PDSL) and 890–1002 (PSGW…GFQP).

Belongs to the ATP-dependent DNA ligase family. Mg(2+) is required as a cofactor.

The protein localises to the nucleus. It catalyses the reaction ATP + (deoxyribonucleotide)n-3'-hydroxyl + 5'-phospho-(deoxyribonucleotide)m = (deoxyribonucleotide)n+m + AMP + diphosphate.. DNA ligase involved in DNA non-homologous end joining (NHEJ); required for double-strand break (DSB) repair. This Aspergillus oryzae (strain ATCC 42149 / RIB 40) (Yellow koji mold) protein is DNA ligase 4 (lig4).